The chain runs to 265 residues: Cytochrome c oxidase subunit 3 (265 aa).

6 consecutive transmembrane segments (helical) span residues 41 to 61 (GGAR…FVWW), 85 to 105 (GFIL…WAFF), 137 to 157 (TLIL…ILAG), 162 to 182 (AVYA…FQGM), 200 to 220 (FFLA…FLII), and 245 to 265 (WHFV…WGGI).

Belongs to the cytochrome c oxidase subunit 3 family. Component of the cytochrome c oxidase (complex IV, CIV), a multisubunit enzyme composed of a catalytic core of 3 subunits and several supernumerary subunits. The complex exists as a monomer or a dimer and forms supercomplexes (SCs) in the inner mitochondrial membrane with ubiquinol-cytochrome c oxidoreductase (cytochrome b-c1 complex, complex III, CIII).

It is found in the mitochondrion inner membrane. It catalyses the reaction 4 Fe(II)-[cytochrome c] + O2 + 8 H(+)(in) = 4 Fe(III)-[cytochrome c] + 2 H2O + 4 H(+)(out). Functionally, component of the cytochrome c oxidase, the last enzyme in the mitochondrial electron transport chain which drives oxidative phosphorylation. The respiratory chain contains 3 multisubunit complexes succinate dehydrogenase (complex II, CII), ubiquinol-cytochrome c oxidoreductase (cytochrome b-c1 complex, complex III, CIII) and cytochrome c oxidase (complex IV, CIV), that cooperate to transfer electrons derived from NADH and succinate to molecular oxygen, creating an electrochemical gradient over the inner membrane that drives transmembrane transport and the ATP synthase. Cytochrome c oxidase is the component of the respiratory chain that catalyzes the reduction of oxygen to water. Electrons originating from reduced cytochrome c in the intermembrane space (IMS) are transferred via the dinuclear copper A center (CU(A)) of subunit 2 and heme A of subunit 1 to the active site in subunit 1, a binuclear center (BNC) formed by heme A3 and copper B (CU(B)). The BNC reduces molecular oxygen to 2 water molecules using 4 electrons from cytochrome c in the IMS and 4 protons from the mitochondrial matrix. In Arabidopsis thaliana (Mouse-ear cress), this protein is Cytochrome c oxidase subunit 3 (COX3).